A 122-amino-acid chain; its full sequence is Beta-2-microglobulin (122 aa).

The signal sequence occupies residues 1–23 (MFLRSTFVAALVACLAYIHLGDA). The Ig-like C1-type domain occupies 28 to 117 (PKVQIYSRNV…STLREATRFT (90 aa)). Cysteine 48 and cysteine 103 form a disulfide bridge.

It belongs to the beta-2-microglobulin family. In terms of assembly, heterodimer of an alpha chain and a beta chain. Beta-2-microglobulin is the beta-chain of major histocompatibility complex class I molecules.

It localises to the secreted. Its function is as follows. Component of the class I major histocompatibility complex (MHC). Involved in the presentation of peptide antigens to the immune system. The protein is Beta-2-microglobulin (b2m) of Acipenser baerii (Siberian sturgeon).